The primary structure comprises 373 residues: Unsaturated rhamnogalacturonyl hydrolase YteR (373 aa).

Residues H40–Y41, D88, and H132–Y136 contribute to the substrate site. D143 acts as the Proton donor in catalysis. Substrate contacts are provided by residues R213–W217 and T333–S334.

It belongs to the glycosyl hydrolase 105 family. Monomer.

It localises to the cytoplasm. It catalyses the reaction 2-O-(4-deoxy-beta-L-threo-hex-4-enopyranuronosyl)-alpha-L-rhamnose + H2O = 5-dehydro-4-deoxy-D-glucuronate + L-rhamnopyranose. Functionally, catalyzes the hydrolysis of unsaturated rhamnogalacturonan disaccharide to yield unsaturated D-galacturonic acid and L-rhamnose. It cannot act on unsaturated glucuronyl hydrolase (UGL) substrates containing unsaturated D-glucuronic acid at the non-reducing terminus, although the active pockets of YesR and UGL are very similar. The chain is Unsaturated rhamnogalacturonyl hydrolase YteR (yteR) from Bacillus subtilis (strain 168).